The primary structure comprises 285 residues: 4-diphosphocytidyl-2-C-methyl-D-erythritol kinase (285 aa).

K28 is an active-site residue. ATP is bound at residue P109–A119. Residue D148 is part of the active site.

The protein belongs to the GHMP kinase family. IspE subfamily.

The catalysed reaction is 4-CDP-2-C-methyl-D-erythritol + ATP = 4-CDP-2-C-methyl-D-erythritol 2-phosphate + ADP + H(+). It functions in the pathway isoprenoid biosynthesis; isopentenyl diphosphate biosynthesis via DXP pathway; isopentenyl diphosphate from 1-deoxy-D-xylulose 5-phosphate: step 3/6. Functionally, catalyzes the phosphorylation of the position 2 hydroxy group of 4-diphosphocytidyl-2C-methyl-D-erythritol. The sequence is that of 4-diphosphocytidyl-2-C-methyl-D-erythritol kinase from Novosphingobium aromaticivorans (strain ATCC 700278 / DSM 12444 / CCUG 56034 / CIP 105152 / NBRC 16084 / F199).